We begin with the raw amino-acid sequence, 252 residues long: CLAVATA3/ESR (CLE)-related protein 4A-2 (252 aa).

A signal peptide spans 1-21 (MAKNAMLCLLILRVVLALAFA). The tract at residues 21-83 (ATNKKGDEEP…SNQLPNNNWM (63 aa)) is required for secretion from the host cytoplasm to the host apoplasm. A glycan (N-linked (GlcNAc...) asparagine) is linked at Asn32. The tract at residues 116–252 (RKTGMHSQRH…APAGPDPIHH (137 aa)) is disordered. Basic and acidic residues-rich tracts occupy residues 125-137 (HHEE…EKRV), 144-179 (PIHH…EKRV), 186-200 (PIHH…EKRA), and 207-242 (PTHH…EKRG). The stretch at 127 to 135 (EETTLEQEK) is one A-1 repeat. The tract at residues 127-219 (EETTLEQEKR…HEETTLEQEK (93 aa)) is 6 X approximate repeat A. The CLE-1 repeat unit spans residues 136 to 147 (RVAGAGPDPIHH). A 6 X approximate repeat CLE region spans residues 136–252 (RVAGAGPDPI…APAGPDPIHH (117 aa)). Residues 148 to 156 (QDTTLEQEK) form an A-2 repeat. A CLE-2 repeat occupies 157 to 168 (RAVPAGPDPKHH). One copy of the A-3 repeat lies at 169-177 (EETTLEQEK). The stretch at 178-189 (RVAGAGPDPIHH) is one CLE-3 repeat. One copy of the A-4 repeat lies at 190–198 (QDTTLEQEK). The stretch at 199–210 (RAVPAGPDPTHH) is one CLE-4 repeat. One copy of the A-5 repeat lies at 211–219 (EETTLEQEK). Residues 220 to 231 (RAVPAGPDPKHH) form a CLE-5 repeat. The A-6 repeat unit spans residues 232 to 240 (EETTFEQEK). The stretch at 241 to 252 (RGAPAGPDPIHH) is one CLE-6 repeat.

It belongs to the CLV3/ESR signal peptide family. In terms of tissue distribution, highly expressed exclusively within the dorsal esophageal gland cell during syncytium formation in host plants.

It localises to the secreted. The protein resides in the host cytoplasm. It is found in the host extracellular space. Its subcellular location is the extracellular space. The protein localises to the apoplast. In terms of biological role, mimics host plant CLE extracellular signal peptides that regulate cell fate. May play a role in the differentiation or division of feeding cells (syncytia) induced in plant roots during infection. The polypeptide is CLAVATA3/ESR (CLE)-related protein 4A-2 (CLE-4A-2) (Globodera rostochiensis (Golden nematode worm)).